The following is a 222-amino-acid chain: Zinc finger C2HC domain-containing protein 1B (222 aa).

The segment at 14–43 (ELFPCEVCGRRFAADVLERHGPICKKLFNR) adopts a C2HC/C3H-type 1 zinc-finger fold. Zn(2+)-binding residues include C18, C21, H33, and C37. The tract at residues 48–78 (FSSLKQRLQGTDIPTVKKTPQSKSPPVRKSN) is disordered. The C2HC/C3H-type 2; degenerate zinc-finger motif lies at 117 to 146 (DYIQRPYCMRRFNESAAERHTNFCKDQSSR). The interval 196-222 (PTKSGLAMDPASGAKLRQGFSKSSKKD) is disordered.

This sequence belongs to the ZC2HC1 family. Requires Zn(2+) as cofactor.

This Homo sapiens (Human) protein is Zinc finger C2HC domain-containing protein 1B (ZC2HC1B).